A 126-amino-acid chain; its full sequence is Profilin (126 aa).

This sequence belongs to the profilin family. Occurs in many kinds of cells as a complex with monomeric actin in a 1:1 ratio.

It localises to the cytoplasm. It is found in the cytoskeleton. Binds to actin and affects the structure of the cytoskeleton. At high concentrations, profilin prevents the polymerization of actin, whereas it enhances it at low concentrations. By binding to PIP2, it inhibits the formation of IP3 and DG. The protein is Profilin of Bombyx mori (Silk moth).